A 677-amino-acid polypeptide reads, in one-letter code: Methionine--tRNA ligase (677 aa).

Positions 15 to 25 match the 'HIGH' region motif; it reads PYANGSIHLGH. Residues C146, C149, C159, and C162 each contribute to the Zn(2+) site. Positions 333–337 match the 'KMSKS' region motif; the sequence is KMSKS. K336 provides a ligand contact to ATP. The tRNA-binding domain maps to 575–677; that stretch reads DFAKVDLRVA…DGAKPGQQVK (103 aa).

Belongs to the class-I aminoacyl-tRNA synthetase family. MetG type 1 subfamily. Homodimer. Zn(2+) is required as a cofactor.

It is found in the cytoplasm. The catalysed reaction is tRNA(Met) + L-methionine + ATP = L-methionyl-tRNA(Met) + AMP + diphosphate. In terms of biological role, is required not only for elongation of protein synthesis but also for the initiation of all mRNA translation through initiator tRNA(fMet) aminoacylation. The chain is Methionine--tRNA ligase from Salmonella arizonae (strain ATCC BAA-731 / CDC346-86 / RSK2980).